A 355-amino-acid polypeptide reads, in one-letter code: MSGISAQLVKKLRDLTDAGMMDCKKALVEVAGDLQKAIDFLREKGLSKAAKKADRIAAEGVIALEVAPDFKSAMMVEINSETDFVAKNEGFKELVKKTLETIKAHNIHATEELLKSPLDNKPFEEYLHSQIAVIGENILVRKIAHLKAPSSHIINGYAHSNARVGVLIGIKYDNEKNAPKVVELARNIAMHAAAMKPQVLDCKDFSLDFVKKETLALIAEIEKDNEEAKRLGKPLKNIPTFGSRIELSDEVLAHQKKAFEDELKAQGKPEKIWDKIVPGKMERFIADNTLIDQRLTLLGQFYVMDDKKTIAQVVADCSKEWDDDLKITEYVRFELGEGIEKKAENFAEEVALQMK.

The tract at residues 82-85 is involved in Mg(2+) ion dislocation from EF-Tu; it reads TDFV.

Belongs to the EF-Ts family.

The protein resides in the cytoplasm. Its function is as follows. Associates with the EF-Tu.GDP complex and induces the exchange of GDP to GTP. It remains bound to the aminoacyl-tRNA.EF-Tu.GTP complex up to the GTP hydrolysis stage on the ribosome. The polypeptide is Elongation factor Ts (Helicobacter pylori (strain HPAG1)).